A 367-amino-acid chain; its full sequence is 2'-5'-oligoadenylate synthase 1A (367 aa).

Residues aspartate 14–lysine 61 are interaction with dsRNA. Serine 64 contacts ATP. Mg(2+) contacts are provided by aspartate 76, aspartate 78, and aspartate 149. The tract at residues glutamine 201 to arginine 211 is interaction with dsRNA. Arginine 211, lysine 214, and glutamine 231 together coordinate ATP. A lipid anchor (S-geranylgeranyl cysteine) is attached at cysteine 364.

This sequence belongs to the 2-5A synthase family. In terms of assembly, monomer. Homotetramer. Interacts with OAS1D; the interaction inhibits OAS1A catalytic activity. Mg(2+) is required as a cofactor. C-terminal prenylated. As to expression, expressed in oocytes and granulosa cells of ovary, in intestine, stomach, spleen and uterus (at protein level). Expressed at high levels in the digestive tract and lymphoid organs. Expressed in ovary and spleen.

It is found in the cytoplasm. The protein resides in the mitochondrion. The protein localises to the nucleus. It localises to the microsome. Its subcellular location is the endoplasmic reticulum. It carries out the reaction 3 ATP = 5'-triphosphoadenylyl-(2'-&gt;5')-adenylyl-(2'-&gt;5')-adenosine + 2 diphosphate. Its activity is regulated as follows. Produced as a latent enzyme which is activated by dsRNA generated during the course of viral infection. The dsRNA activator must be at least 15 nucleotides long, and no modification of the 2'-hydroxyl group is tolerated. ssRNA or dsDNA do not act as activators. Functionally, interferon-induced, dsRNA-activated antiviral enzyme which plays a critical role in cellular innate antiviral response. In addition, it may also play a role in other cellular processes such as apoptosis, cell growth, differentiation and gene regulation. Synthesizes higher oligomers of 2'-5'-oligoadenylates (2-5A) from ATP which then bind to the inactive monomeric form of ribonuclease L (RNase L) leading to its dimerization and subsequent activation. Activation of RNase L leads to degradation of cellular as well as viral RNA, resulting in the inhibition of protein synthesis, thus terminating viral replication. Can mediate the antiviral effect via the classical RNase L-dependent pathway or an alternative antiviral pathway independent of RNase L. The protein is 2'-5'-oligoadenylate synthase 1A (Oas1a) of Mus musculus (Mouse).